Consider the following 202-residue polypeptide: Urease accessory protein UreE (202 aa).

The interval 138–202 (RGAYHSHGGH…HGHHHGHKHD (65 aa)) is disordered. Over residues 147–193 (HSHDHGHAAHDHGHAAHDHGHNHDHDHGHAHGHDHQHDHNCDHDHDH) the composition is skewed to basic and acidic residues.

Belongs to the UreE family.

Its subcellular location is the cytoplasm. In terms of biological role, involved in urease metallocenter assembly. Binds nickel. Probably functions as a nickel donor during metallocenter assembly. This chain is Urease accessory protein UreE, found in Rhizobium etli (strain CIAT 652).